The following is a 770-amino-acid chain: Lysine-specific histone demethylase 1 (770 aa).

The segment at 1–21 is disordered; it reads MSSDTGSEYLDEEIRGDELGP. The region spanning 28 to 126 is the SWIRM domain; it reads LAAAASAARL…FGRYVRSTKI (99 aa). 137 to 165 contacts FAD; the sequence is VIVIGAGAAGISAATQLESFGFDVIVLEA. Positions 718-739 are disordered; sequence NEAVADIPNAPNAPNAQKPEEI.

Belongs to the flavin monoamine oxidase family. Probably part of a large repressor complex. Interacts with CoREST protein spr-1. Interacts with chromobox protein homolog hpl-1. The cofactor is FAD.

The protein resides in the nucleus. It carries out the reaction N(6),N(6)-dimethyl-L-lysyl(4)-[histone H3] + 2 A + 2 H2O = L-lysyl(4)-[histone H3] + 2 formaldehyde + 2 AH2. In terms of biological role, histone demethylase that specifically demethylates 'Lys-4' of histone H3, a specific tag for epigenetic transcriptional activation, thereby acting as a corepressor. Acts by oxidizing the substrate by FAD to generate the corresponding imine that is subsequently hydrolyzed. Demethylates both mono- and di-methylated 'Lys-4' of histone H3. May be involved in H3 demethylation in mitotic cells including gut and embryonic cells. Participates in the transcriptional repression of the presenilin protein hop-1. May act via the formation of a multiprotein complex that remodel or modify the chromatin. Together with met-2, set-17 and set-26, required for transgenerational fertility. Plays a role in developmental growth and lifespan regulation in response to ultraviolet-induced damage. This is Lysine-specific histone demethylase 1 from Caenorhabditis elegans.